The sequence spans 238 residues: Sugar fermentation stimulation protein homolog (238 aa).

It belongs to the SfsA family.

The chain is Sugar fermentation stimulation protein homolog from Klebsiella pneumoniae (strain 342).